Reading from the N-terminus, the 271-residue chain is 2-amino-3,7-dideoxy-D-threo-hept-6-ulosonate synthase (271 aa).

Catalysis depends on Asp-33, which acts as the Proton acceptor. 1-deoxy-D-threo-hexo-2,5-diulose 6-phosphate-binding positions include 33–37 (DHGVS) and 153–155 (YPR). The active-site Proton donor is Tyr-153. The active-site Schiff-base intermediate with substrate is Lys-184. 1-deoxy-D-threo-hexo-2,5-diulose 6-phosphate is bound by residues 209–210 (GG) and 236–237 (GR).

This sequence belongs to the DeoC/FbaB aldolase family. ADHS subfamily. Homodecamer.

It catalyses the reaction 1-deoxy-D-threo-hexo-2,5-diulose 6-phosphate + L-aspartate 4-semialdehyde = 2,3-dioxopropyl phosphate + 2-amino-2,3,7-trideoxy-D-lyxo-hept-6-ulosonate. Functionally, catalyzes a transaldol reaction between 6-deoxy-5-ketofructose 1-phosphate (DKFP) and L-aspartate semialdehyde (ASA) with an elimination of hydroxypyruvaldehyde phosphate to yield 2-amino-3,7-dideoxy-D-threo-hept-6-ulosonate (ADH). Plays a key role in an alternative pathway of the biosynthesis of 3-dehydroquinate (DHQ), which is involved in the canonical pathway for the biosynthesis of aromatic amino acids. The chain is 2-amino-3,7-dideoxy-D-threo-hept-6-ulosonate synthase from Methanococcus aeolicus (strain ATCC BAA-1280 / DSM 17508 / OCM 812 / Nankai-3).